Reading from the N-terminus, the 158-residue chain is Glutathione peroxidase homolog BsaA (158 aa).

Threonine 36 is an active-site residue.

It belongs to the glutathione peroxidase family.

This Staphylococcus epidermidis (strain ATCC 35984 / DSM 28319 / BCRC 17069 / CCUG 31568 / BM 3577 / RP62A) protein is Glutathione peroxidase homolog BsaA (bsaA).